Consider the following 214-residue polypeptide: Adenylate kinase (214 aa).

10–15 (GAGKGT) is an ATP binding site. The segment at 30–59 (STGDMLRAAIKAGTELGLKAKAVMDAGQLV) is NMP. Residues T31, R36, 57-59 (QLV), 85-88 (GFPR), and Q92 each bind AMP. An LID region spans residues 122–159 (GRRVHSGSGRTYHVVFNPPKVEGKDDVTGEDLVIRADD). ATP contacts are provided by residues R123 and 132 to 133 (TY). AMP-binding residues include R156 and R167. Q200 contributes to the ATP binding site.

Belongs to the adenylate kinase family. As to quaternary structure, monomer.

Its subcellular location is the cytoplasm. The catalysed reaction is AMP + ATP = 2 ADP. It functions in the pathway purine metabolism; AMP biosynthesis via salvage pathway; AMP from ADP: step 1/1. Functionally, catalyzes the reversible transfer of the terminal phosphate group between ATP and AMP. Plays an important role in cellular energy homeostasis and in adenine nucleotide metabolism. In Aeromonas hydrophila subsp. hydrophila (strain ATCC 7966 / DSM 30187 / BCRC 13018 / CCUG 14551 / JCM 1027 / KCTC 2358 / NCIMB 9240 / NCTC 8049), this protein is Adenylate kinase.